The following is a 389-amino-acid chain: Maintenance of mitochondrial morphology protein 1-1 (389 aa).

The Lumenal segment spans residues 1 to 22; that stretch reads MSQFVLPAVASEGIINWPFLTG. Residues 23–43 form a helical membrane-spanning segment; the sequence is FMLGQFSVGLVLLIFVRFFIF. Residues 44-389 lie on the Cytoplasmic side of the membrane; it reads SDQTEPDINT…YRSLQTSPRR (346 aa). One can recognise an SMP-LTD domain in the interval 83 to 278; it reads QPESLDWFSV…YPEYQQFELP (196 aa). Disordered regions lie at residues 283–345 and 360–389; these read KTSA…PKFI and FYEM…SPRR. Polar residues predominate over residues 330–341; the sequence is MSMSSQRPNINN.

This sequence belongs to the MMM1 family. In terms of assembly, homodimer. Component of the ER-mitochondria encounter structure (ERMES) or MDM complex, composed of MMM1, MDM10, MDM12 and MDM34. An MMM1 homodimer associates with one molecule of MDM12 on each side in a pairwise head-to-tail manner, and the SMP-LTD domains of MMM1 and MDM12 generate a continuous hydrophobic tunnel for phospholipid trafficking.

The protein localises to the endoplasmic reticulum membrane. Its function is as follows. Component of the ERMES/MDM complex, which serves as a molecular tether to connect the endoplasmic reticulum (ER) and mitochondria. Components of this complex are involved in the control of mitochondrial shape and protein biogenesis, and function in nonvesicular lipid trafficking between the ER and mitochondria. The MDM12-MMM11 subcomplex functions in the major beta-barrel assembly pathway that is responsible for biogenesis of all outer membrane beta-barrel proteins, and acts in a late step after the SAM complex. The MDM10-MDM12-MMM1 subcomplex further acts in the TOM40-specific pathway after the action of the MDM12-MMM1 complex. Essential for establishing and maintaining the structure of mitochondria and maintenance of mtDNA nucleoids. The polypeptide is Maintenance of mitochondrial morphology protein 1-1 (Yarrowia lipolytica (strain CLIB 122 / E 150) (Yeast)).